A 358-amino-acid chain; its full sequence is tRNA(Ile)-lysidine synthase (358 aa).

Position 35–40 (35–40 (SGGPDS)) interacts with ATP.

It belongs to the tRNA(Ile)-lysidine synthase family.

The protein localises to the cytoplasm. The catalysed reaction is cytidine(34) in tRNA(Ile2) + L-lysine + ATP = lysidine(34) in tRNA(Ile2) + AMP + diphosphate + H(+). Its function is as follows. Ligates lysine onto the cytidine present at position 34 of the AUA codon-specific tRNA(Ile) that contains the anticodon CAU, in an ATP-dependent manner. Cytidine is converted to lysidine, thus changing the amino acid specificity of the tRNA from methionine to isoleucine. The chain is tRNA(Ile)-lysidine synthase from Bradyrhizobium sp. (strain BTAi1 / ATCC BAA-1182).